A 243-amino-acid polypeptide reads, in one-letter code: MFSRAALLTAQRPLTVAATRSAAAAAAPGGAIERRQRPEHPGKVRLGFLPEEWFQFFYNKTGVTGPYTFGVGLITYLCSKEIYVMEHEYYSGLSLGIMAIIAVKKLGPVIAKWADGEIDKIESEWKEGREAELKVLSDAIEAEKKEQWRADGALLLMEAKKENIALQLEAAFRERAMNVYSEVKRRLDYQVECRHVERRLSQKHMVNWITTNVLASISPQQEKETLNKCIADLSALALRVKSA.

Belongs to the eukaryotic ATPase B chain family. In terms of assembly, F-type ATPases have 2 components, CF(1) - the catalytic core - and CF(0) - the membrane proton channel. CF(1) has five subunits: alpha(3), beta(3), gamma(1), delta(1), epsilon(1). CF(0) has three main subunits: a, b and c.

Its subcellular location is the mitochondrion. The protein localises to the mitochondrion inner membrane. Its function is as follows. Mitochondrial membrane ATP synthase (F(1)F(0) ATP synthase or Complex V) produces ATP from ADP in the presence of a proton gradient across the membrane which is generated by electron transport complexes of the respiratory chain. F-type ATPases consist of two structural domains, F(1) - containing the extramembraneous catalytic core, and F(0) - containing the membrane proton channel, linked together by a central stalk and a peripheral stalk. During catalysis, ATP synthesis in the catalytic domain of F(1) is coupled via a rotary mechanism of the central stalk subunits to proton translocation. Part of the complex F(0) domain and the peripheric stalk, which acts as a stator to hold the catalytic alpha(3)beta(3) subcomplex and subunit a/ATP6 static relative to the rotary elements. This is ATP synthase subunit b, mitochondrial from Drosophila melanogaster (Fruit fly).